The primary structure comprises 790 residues: B3 domain-containing transcription repressor VAL1 (790 aa).

Residues 234–260 (KPSRPAISTPPVASKSAQARIGRPPVE) form a disordered region. Residues 295–396 (FEKTLSASDA…KLIMGSRKAA (102 aa)) constitute a DNA-binding region (TF-B3). Disordered stretches follow at residues 400 to 429 (DMQG…SING) and 446 to 468 (NLNS…EKKR). A compositionally biased stretch (polar residues) spans 405 to 429 (GLTNGTSTEDTSSSGVTENPPSING). The CW-type zinc-finger motif lies at 538-588 (SGEQERWATCDDCSKWRRLPVDALLSFKWTCIDNVWDVSRCSCSAPEESLK). Zn(2+) is bound by residues cysteine 547, cysteine 550, cysteine 568, and cysteine 580. Positions 685–732 (LMMRRKKKQLERDVTAAEDKKKKDMELAESDKSKEEKEVNTARIDLNS) form a coiled coil. The tract at residues 689–737 (RKKKQLERDVTAAEDKKKKDMELAESDKSKEEKEVNTARIDLNSDPYNK) is disordered. Basic and acidic residues predominate over residues 694-724 (LERDVTAAEDKKKKDMELAESDKSKEEKEVN).

As to quaternary structure, interacts with SNL1. In terms of tissue distribution, expressed in flowers and at lower levels in roots, stems and leaves.

Its subcellular location is the nucleus. Its function is as follows. Transcriptional repressor of gene expression involved in embryonic pathways, such as LEC1, ABI3, and FUS3. Repressor of the sugar-inducible genes involved in the seed maturation program in seedlings. Plays an essential role in regulating the transition from seed maturation to seedling growth. Functionally redundant with VAL2/HSL1. This chain is B3 domain-containing transcription repressor VAL1 (VAL1), found in Arabidopsis thaliana (Mouse-ear cress).